The sequence spans 311 residues: Formyltransferase/hydrolase complex subunit D (311 aa).

The protein belongs to the FTR family. In terms of assembly, homotetramer. Octaheteromer. Part of the formyltransferase/hydrolase complex fhc; composed of FhcA, FhcB, FhcC and FhcD.

Its subcellular location is the cytoplasm. The enzyme catalyses N-formylmethanofuran + 5,6,7,8-tetrahydromethanopterin + H(+) = N(5)-formyl-5,6,7,8-tetrahydromethanopterin + methanofuran. Its pathway is one-carbon metabolism; formaldehyde degradation; formate from formaldehyde (H(4)MPT route): step 4/5. Involved in the transformation of 5-formyl tetrahydromethanopterin (5-formyl-H(4)MPT) to methanofuran (MFR) and formate via the intermediate formylmethanofuran (formyl-MFR). Catalyzes the transfer of a formyl group from 5-formyl-H(4)MPT to MFR to produce tetrahydromethanopterin (H(4)MPT) and formyl-MFR, which is then hydrolyzed to formate and MFR. The sequence is that of Formyltransferase/hydrolase complex subunit D from Methylorubrum extorquens (strain ATCC 14718 / DSM 1338 / JCM 2805 / NCIMB 9133 / AM1) (Methylobacterium extorquens).